Consider the following 311-residue polypeptide: UDP-N-acetylenolpyruvoylglucosamine reductase (311 aa).

Residues 28–197 enclose the FAD-binding PCMH-type domain; that stretch reads KIGGNARWLV…VSARFHLARG (170 aa). The active site involves arginine 177. Residue serine 226 is the Proton donor of the active site. Residue glutamate 296 is part of the active site.

Belongs to the MurB family. Requires FAD as cofactor.

Its subcellular location is the cytoplasm. The enzyme catalyses UDP-N-acetyl-alpha-D-muramate + NADP(+) = UDP-N-acetyl-3-O-(1-carboxyvinyl)-alpha-D-glucosamine + NADPH + H(+). The protein operates within cell wall biogenesis; peptidoglycan biosynthesis. In terms of biological role, cell wall formation. The polypeptide is UDP-N-acetylenolpyruvoylglucosamine reductase (Magnetococcus marinus (strain ATCC BAA-1437 / JCM 17883 / MC-1)).